We begin with the raw amino-acid sequence, 124 residues long: Desulfoferrodoxin homolog (124 aa).

Fe cation-binding residues include Cys-10, Cys-13, Cys-29, Cys-30, His-49, His-69, His-75, Cys-117, and His-120.

The protein belongs to the desulfoferrodoxin family. Fe(3+) is required as a cofactor. Requires Cu(2+) as cofactor.

This is Desulfoferrodoxin homolog from Methanothermobacter thermautotrophicus (strain ATCC 29096 / DSM 1053 / JCM 10044 / NBRC 100330 / Delta H) (Methanobacterium thermoautotrophicum).